The primary structure comprises 371 residues: Queuine tRNA-ribosyltransferase (371 aa).

The active-site Proton acceptor is the D89. Residues 89–93 (DSGGF), D143, Q185, and G212 contribute to the substrate site. The RNA binding stretch occupies residues 243-249 (GVGKPED). The Nucleophile role is filled by D262. The segment at 267 to 271 (TRNAR) is RNA binding; important for wobble base 34 recognition. 4 residues coordinate Zn(2+): C300, C302, C305, and H331.

The protein belongs to the queuine tRNA-ribosyltransferase family. As to quaternary structure, homodimer. Within each dimer, one monomer is responsible for RNA recognition and catalysis, while the other monomer binds to the replacement base PreQ1. Requires Zn(2+) as cofactor.

It carries out the reaction 7-aminomethyl-7-carbaguanine + guanosine(34) in tRNA = 7-aminomethyl-7-carbaguanosine(34) in tRNA + guanine. Its pathway is tRNA modification; tRNA-queuosine biosynthesis. Functionally, catalyzes the base-exchange of a guanine (G) residue with the queuine precursor 7-aminomethyl-7-deazaguanine (PreQ1) at position 34 (anticodon wobble position) in tRNAs with GU(N) anticodons (tRNA-Asp, -Asn, -His and -Tyr). Catalysis occurs through a double-displacement mechanism. The nucleophile active site attacks the C1' of nucleotide 34 to detach the guanine base from the RNA, forming a covalent enzyme-RNA intermediate. The proton acceptor active site deprotonates the incoming PreQ1, allowing a nucleophilic attack on the C1' of the ribose to form the product. After dissociation, two additional enzymatic reactions on the tRNA convert PreQ1 to queuine (Q), resulting in the hypermodified nucleoside queuosine (7-(((4,5-cis-dihydroxy-2-cyclopenten-1-yl)amino)methyl)-7-deazaguanosine). This is Queuine tRNA-ribosyltransferase from Pseudomonas putida (strain ATCC 47054 / DSM 6125 / CFBP 8728 / NCIMB 11950 / KT2440).